An 844-amino-acid polypeptide reads, in one-letter code: Meiosis-specific protein PAIR3 (844 aa).

Disordered stretches follow at residues 41–389, 418–506, 532–604, and 616–669; these read TSSV…RERR, KLSS…RFSD, DDLF…QISI, and WLSD…EPEK. Over residues 106-120 the composition is skewed to polar residues; the sequence is QPDDNAIEQTGTFSF. 2 stretches are compositionally biased toward basic and acidic residues: residues 122–134 and 145–164; these read TRRE…DQLD and RQVE…RMKL. Composition is skewed to polar residues over residues 191–208 and 218–229; these read QPKS…QKVF and TPAQFNSQTANK. 2 stretches are compositionally biased toward basic and acidic residues: residues 256–270 and 324–363; these read RKKE…DKSG and AKVE…KGEK. Composition is skewed to polar residues over residues 364–382 and 420–440; these read TNSF…SCSR and SSPQ…SPQQ. The segment covering 441-456 has biased composition (basic and acidic residues); it reads KENDNTHIPEASDRTA. Over residues 459–473 the composition is skewed to low complexity; the sequence is NSFNSTPSPAANPSP. The span at 545-554 shows a compositional bias: polar residues; the sequence is RSRSTSFTSD. Residues 616–640 show a composition bias toward basic and acidic residues; that stretch reads WLSDVDSPDKSSIEHLGRKSHLKEG. Residues 646-661 show a composition bias toward polar residues; it reads QLTSPTHFATSGTQET. Positions 731 to 765 form a coiled coil; the sequence is VNAGKSKRKRLESTFEEQQEKLRILHEKFKEEVNQ.

As to expression, expressed in pollen mother cells and the ovule tissues during meiosis.

The protein localises to the chromosome. Its subcellular location is the nucleus. Functionally, plays a crucial role in homologous chromosome pairing and synapsis in meiosis. Does not seem required for cytokinesis. Is essential for meiotic bouquet formation, homologous chromosome pairing and normal recombination, and synaptonemal complex (SC) assembly. Required for the proper association of PAIR2 with chromosomes. The polypeptide is Meiosis-specific protein PAIR3 (Oryza sativa subsp. japonica (Rice)).